The chain runs to 409 residues: Glycosaminoglycan xylosylkinase (409 aa).

The Cytoplasmic segment spans residues 1–6 (MKLKQR). The chain crosses the membrane as a helical; Signal-anchor for type II membrane protein span at residues 7–25 (VVVLCAVLFLLGLAKVFLL). Over 26 to 409 (DGGEGSAASR…IEDRMNLPHP (384 aa)) the chain is Lumenal. ATP-binding residues include Gln-107 and Lys-123. Asp-142 contributes to the Mn(2+) binding site. The N-linked (GlcNAc...) asparagine glycan is linked to Asn-193. 2 disulfide bridges follow: Cys-196–Cys-211 and Cys-201–Cys-204. Residue 222–225 (TLWL) coordinates ATP. Cystine bridges form between Cys-257/Cys-331 and Cys-332/Cys-389. The active site involves Asp-289. ATP-binding residues include Glu-294 and Asp-309. Asp-309 contributes to the Mn(2+) binding site.

Belongs to the FAM20 family. The cofactor is Mn(2+).

Its subcellular location is the golgi apparatus membrane. The catalysed reaction is 3-O-(beta-D-galactosyl-(1-&gt;3)-beta-D-galactosyl-(1-&gt;4)-beta-D-xylosyl)-L-seryl-[protein] + ATP = 3-O-(beta-D-galactosyl-(1-&gt;3)-beta-D-galactosyl-(1-&gt;4)-beta-D-2-O-phosphoxylosyl)-L-seryl-[protein] + ADP + H(+). In terms of biological role, responsible for the 2-O-phosphorylation of xylose in the glycosaminoglycan-protein linkage region of proteoglycans thereby regulating the amount of mature GAG chains. Sulfated glycosaminoglycans (GAGs), including heparan sulfate and chondroitin sulfate, are synthesized on the so-called common GAG-protein linkage region (GlcUAbeta1-3Galbeta1-3Galbeta1-4Xylbeta1-O-Ser) of core proteins, which is formed by the stepwise addition of monosaccharide residues by the respective specific glycosyltransferases. This Danio rerio (Zebrafish) protein is Glycosaminoglycan xylosylkinase.